The following is a 397-amino-acid chain: Lysophospholipid transporter LplT (397 aa).

Residues 1-17 (MSESVHTNTSLWSKGMK) are Periplasmic-facing. The helical transmembrane segment at 18 to 38 (AVIVAQFLSAFGDNALLFATL) threads the bilayer. At 39–52 (ALLKAQFYPEWSQP) the chain is on the cytoplasmic side. A helical membrane pass occupies residues 53 to 73 (ILQMVFVGAYILFAPFVGQVA). Over 74-90 (DSFAKGRVMMFANGLKL) the chain is Periplasmic. The helical transmembrane segment at 91 to 111 (LGAASICFGINPFLGYTLVGV) threads the bilayer. The Cytoplasmic portion of the chain corresponds to 112 to 144 (GAAAYSPAKYGILGELTTGSKLVKANGLMEAST). The chain crosses the membrane as a helical span at residues 145-165 (IAAILLGSVAGGVLADWHILV). Position 166 (Ala-166) is a topological domain, periplasmic. The helical transmembrane segment at 167 to 187 (LAACALAYGGAVVANIYIPKL) threads the bilayer. Over 188 to 226 (AAARPGQSWNLISMTRSFLNACTSLWRNGETRFSLVGTS) the chain is Cytoplasmic. The chain crosses the membrane as a helical span at residues 227–247 (LFWGAGVTLRFLLVLWVPVAL). Residues 248–256 (GITDNATPT) lie on the Periplasmic side of the membrane. Residues 257-277 (YLNAMVAIGIVVGAGAAAKLV) form a helical membrane-spanning segment. Over 278 to 280 (TLE) the chain is Cytoplasmic. A helical transmembrane segment spans residues 281–301 (TVSRCMPAGILIGVVVLIFSL). The Periplasmic portion of the chain corresponds to 302-304 (QHE). A helical transmembrane segment spans residues 305-325 (LLPAYALLMLIGVLGGFFVVP). Topologically, residues 326 to 343 (LNALLQERGKKSVGAGNA) are cytoplasmic. The chain crosses the membrane as a helical span at residues 344 to 364 (IAVQNLGENSAMLLMLGIYSL). Residues 365-366 (AV) are Periplasmic-facing. The helical transmembrane segment at 367 to 387 (MVGIPVVPIGIGFGALFALAI) threads the bilayer. Residues 388 to 397 (TALWIWQRRH) are Cytoplasmic-facing.

It belongs to the major facilitator superfamily. LplT (TC 2.A.1.42) family.

The protein localises to the cell inner membrane. Catalyzes the facilitated diffusion of 2-acyl-glycero-3-phosphoethanolamine (2-acyl-GPE) into the cell. In Escherichia coli O6:K15:H31 (strain 536 / UPEC), this protein is Lysophospholipid transporter LplT.